Here is a 394-residue protein sequence, read N- to C-terminus: Exodeoxyribonuclease 7 large subunit (394 aa).

The protein belongs to the XseA family. In terms of assembly, heterooligomer composed of large and small subunits.

Its subcellular location is the cytoplasm. It catalyses the reaction Exonucleolytic cleavage in either 5'- to 3'- or 3'- to 5'-direction to yield nucleoside 5'-phosphates.. Its function is as follows. Bidirectionally degrades single-stranded DNA into large acid-insoluble oligonucleotides, which are then degraded further into small acid-soluble oligonucleotides. The chain is Exodeoxyribonuclease 7 large subunit from Thermotoga petrophila (strain ATCC BAA-488 / DSM 13995 / JCM 10881 / RKU-1).